A 994-amino-acid polypeptide reads, in one-letter code: Alpha-mannosidase F (994 aa).

An N-terminal signal peptide occupies residues 1–20; sequence MKNFYYFILILLFFNEVCYS. His35, Asp37, and Asp151 together coordinate Zn(2+). The active-site Nucleophile is Asp151. N-linked (GlcNAc...) asparagine glycosylation is found at Asn247 and Asn381. His392 is a Zn(2+) binding site. 3 N-linked (GlcNAc...) asparagine glycosylation sites follow: Asn554, Asn712, and Asn932.

It belongs to the glycosyl hydrolase 38 family. The cofactor is Zn(2+).

It is found in the secreted. It catalyses the reaction Hydrolysis of terminal, non-reducing alpha-D-mannose residues in alpha-D-mannosides.. This chain is Alpha-mannosidase F (manF), found in Dictyostelium discoideum (Social amoeba).